Here is a 511-residue protein sequence, read N- to C-terminus: Alpha-amylase 1A (511 aa).

Residues 1 to 15 form the signal peptide; it reads MKLFWLLFTIGFCWA. Gln16 carries the pyrrolidone carboxylic acid modification. Intrachain disulfides connect Cys43-Cys101, Cys85-Cys130, and Cys156-Cys175. Positions 115, 173, and 182 each coordinate Ca(2+). Chloride is bound at residue Arg210. The active-site Nucleophile is the Asp212. His216 is a binding site for Ca(2+). Catalysis depends on Glu248, which acts as the Proton donor. Residues Asn313 and Arg352 each contribute to the chloride site. Deamidated asparagine; partial is present on Asn365. An intrachain disulfide couples Cys393 to Cys399. Position 427 is a deamidated asparagine; partial; alternate (Asn427). The N-linked (GlcNAc...) asparagine glycan is linked to Asn427. Cys465 and Cys477 form a disulfide bridge. Deamidated asparagine; partial is present on Asn474. An N-linked (GlcNAc...) asparagine glycan is attached at Asn476.

Belongs to the glycosyl hydrolase 13 family. Monomer. The cofactor is Ca(2+). Chloride is required as a cofactor.

Its subcellular location is the secreted. The catalysed reaction is Endohydrolysis of (1-&gt;4)-alpha-D-glucosidic linkages in polysaccharides containing three or more (1-&gt;4)-alpha-linked D-glucose units.. Its function is as follows. Calcium-binding enzyme that initiates starch digestion in the oral cavity. Catalyzes the hydrolysis of internal (1-&gt;4)-alpha-D-glucosidic bonds, yielding a mixture of maltose, isomaltose, small amounts of glucose as well as small linear and branched oligosaccharides called dextrins. This chain is Alpha-amylase 1A, found in Homo sapiens (Human).